Here is a 217-residue protein sequence, read N- to C-terminus: 3,4-dihydroxy-2-butanone 4-phosphate synthase (217 aa).

D-ribulose 5-phosphate contacts are provided by residues 37 to 38 (RE), aspartate 42, 150 to 154 (RQGHT), and glutamate 174. Glutamate 38 provides a ligand contact to Mg(2+). Histidine 153 contributes to the Mg(2+) binding site.

This sequence belongs to the DHBP synthase family. In terms of assembly, homodimer. The cofactor is Mg(2+). Mn(2+) serves as cofactor.

It carries out the reaction D-ribulose 5-phosphate = (2S)-2-hydroxy-3-oxobutyl phosphate + formate + H(+). The protein operates within cofactor biosynthesis; riboflavin biosynthesis; 2-hydroxy-3-oxobutyl phosphate from D-ribulose 5-phosphate: step 1/1. Its function is as follows. Catalyzes the conversion of D-ribulose 5-phosphate to formate and 3,4-dihydroxy-2-butanone 4-phosphate. The sequence is that of 3,4-dihydroxy-2-butanone 4-phosphate synthase from Photorhabdus laumondii subsp. laumondii (strain DSM 15139 / CIP 105565 / TT01) (Photorhabdus luminescens subsp. laumondii).